The primary structure comprises 212 residues: Adenylate kinase (212 aa).

10-15 (GAGKGT) contacts ATP. The interval 30–59 (STGDMFRAAMANQTEMGRLAKSYIDKGELV) is NMP. AMP-binding positions include threonine 31, arginine 36, 57–59 (ELV), 86–89 (GYPR), and glutamine 93. The interval 127 to 159 (GRIINRKTGETFHKVFNPPVDYKEEDYYQREDD) is LID. Residues arginine 128 and 137 to 138 (TF) contribute to the ATP site. Positions 156 and 167 each coordinate AMP. Residue glutamine 195 coordinates ATP.

As to quaternary structure, monomer.

It localises to the cytoplasm. It catalyses the reaction AMP + ATP = 2 ADP. Its pathway is purine metabolism; AMP biosynthesis via salvage pathway; AMP from ADP: step 1/1. Functionally, catalyzes the reversible transfer of the terminal phosphate group between ATP and AMP. Plays an important role in cellular energy homeostasis and in adenine nucleotide metabolism. This Streptococcus pyogenes serotype M6 (strain ATCC BAA-946 / MGAS10394) protein is Adenylate kinase.